The sequence spans 176 residues: ATP-dependent protease subunit HslV (176 aa).

Residue threonine 2 is part of the active site. Na(+) is bound by residues glycine 157, cysteine 160, and threonine 163.

It belongs to the peptidase T1B family. HslV subfamily. A double ring-shaped homohexamer of HslV is capped on each side by a ring-shaped HslU homohexamer. The assembly of the HslU/HslV complex is dependent on binding of ATP.

It is found in the cytoplasm. The enzyme catalyses ATP-dependent cleavage of peptide bonds with broad specificity.. Its activity is regulated as follows. Allosterically activated by HslU binding. Its function is as follows. Protease subunit of a proteasome-like degradation complex believed to be a general protein degrading machinery. The protein is ATP-dependent protease subunit HslV of Klebsiella pneumoniae (strain 342).